We begin with the raw amino-acid sequence, 295 residues long: ATP synthase gamma chain (295 aa).

It belongs to the ATPase gamma chain family. As to quaternary structure, F-type ATPases have 2 components, CF(1) - the catalytic core - and CF(0) - the membrane proton channel. CF(1) has five subunits: alpha(3), beta(3), gamma(1), delta(1), epsilon(1). CF(0) has three main subunits: a, b and c.

The protein resides in the cell membrane. Functionally, produces ATP from ADP in the presence of a proton gradient across the membrane. The gamma chain is believed to be important in regulating ATPase activity and the flow of protons through the CF(0) complex. The protein is ATP synthase gamma chain of Acetivibrio thermocellus (strain ATCC 27405 / DSM 1237 / JCM 9322 / NBRC 103400 / NCIMB 10682 / NRRL B-4536 / VPI 7372) (Clostridium thermocellum).